The following is a 500-amino-acid chain: Cytochrome P450 71B38 (500 aa).

A helical transmembrane segment spans residues 3 to 23 (IFLCFLLLLPLSLILFKKLLP). Cys441 serves as a coordination point for heme.

The protein belongs to the cytochrome P450 family. Heme is required as a cofactor.

The protein localises to the membrane. The protein is Cytochrome P450 71B38 (CYP71B38) of Arabidopsis thaliana (Mouse-ear cress).